A 219-amino-acid chain; its full sequence is MGQKINPLGFRLGTTQDHHSLWFSQPKNYSESLQEDKKIRDFIKNYVQNNMIKASGAEGIARIYIQKRIDLIQVVIFMGFPKLLIETRPQGIKELQRTLQKEFNFGNQKLNITITRIEKPYGNPNILAEFIAVQLKNRVSFRKAMKKAIELAEQADTKGIQVQIAGRVDGKEIARVEWIREGRVPRQTIRANLDYCSYPVRTIYGVLGVKIWIFLDQAK.

Residues 43-118 (IKNYVQNNMI…KLNITITRIE (76 aa)) form the KH type-2 domain.

The protein belongs to the universal ribosomal protein uS3 family. Part of the 30S ribosomal subunit.

The protein localises to the plastid. This is Small ribosomal subunit protein uS3c (rps3) from Cuscuta exaltata (Tall dodder).